We begin with the raw amino-acid sequence, 1690 residues long: rRNA biogenesis protein rrp5 (1690 aa).

Disordered stretches follow at residues 1–42 (MAGN…GASS) and 59–90 (FMES…ELDN). A compositionally biased stretch (polar residues) spans 11 to 32 (ASEGSDSQGNERISSLSANEAT). Residues 72–83 (KTRPKKKGSKKS) are compositionally biased toward basic residues. S1 motif domains are found at residues 109-209 (GSLI…LSLK), 226-289 (GSMI…LTAT), 306-376 (GDYI…VSFL), 398-473 (GFIV…LSFQ), 490-559 (GQFV…LTLK), 579-648 (GTQT…VGCR), 666-739 (GSVL…LSLK), 761-830 (GIKY…MSFK), 866-942 (GKIT…ISHR), 973-1044 (GDEV…IGPL), 1053-1122 (GSRL…LSAR), 1147-1216 (GDIC…MSLK), and 1236-1307 (GSNL…LGLK). A disordered region spans residues 1313–1424 (SDSDISMSDN…EEKDLDEIPS (112 aa)). Acidic residues-rich tracts occupy residues 1348–1367 (QSEE…EEEP), 1390–1400 (DTEDSEDEEDE), and 1412–1421 (FDDEEKDLDE). A Phosphothreonine modification is found at T1391. S1394 carries the phosphoserine modification. HAT repeat units follow at residues 1420-1452 (DEIP…YHLN), 1526-1558 (GKVD…FLLN), and 1596-1628 (GDPE…MEMK). S1684 and S1686 each carry phosphoserine.

In terms of assembly, component of the ribosomal small subunit (SSU) processome.

Its subcellular location is the nucleus. It is found in the nucleolus. Involved in the biogenesis of rRNA. Required for the formation of 18S and 5.8S rRNA. In Schizosaccharomyces pombe (strain 972 / ATCC 24843) (Fission yeast), this protein is rRNA biogenesis protein rrp5.